Here is a 572-residue protein sequence, read N- to C-terminus: Thiamine biosynthesis protein THI22 (572 aa).

Residues 1–19 (MVIILLGLCTLGFPRTAFC) form the signal peptide.

It belongs to the thiaminase-2 family.

Its subcellular location is the secreted. Is not required for thiamine biosynthesis. In Saccharomyces cerevisiae (strain ATCC 204508 / S288c) (Baker's yeast), this protein is Thiamine biosynthesis protein THI22 (THI22).